We begin with the raw amino-acid sequence, 251 residues long: uncharacterized protein (251 aa).

The tract at residues 1–22 (MTQLPELGLRSPNNKSPTGPHP) is disordered.

This is an uncharacterized protein from Homo sapiens (Human).